A 1752-amino-acid polypeptide reads, in one-letter code: Chitin synthase E (1752 aa).

1 to 8 (GESGSGKT) serves as a coordination point for ATP. Positions 492–520 (SSKPLRMPSMARRKTSPSSRLAFDAGDAD) are disordered. The segment at 558–582 (LDIVNKCLSSTNLNPYFIFCLKPND) is actin-binding. 2 consecutive transmembrane segments (helical) span residues 789-809 (WIAL…KLFG) and 828-848 (LIIW…PGLV). Residues 852-940 (QHVYSAAELS…LLDYRPTNIS (89 aa)) form the Cytochrome b5 heme-binding domain. N-linked (GlcNAc...) asparagine glycosylation is found at asparagine 938 and asparagine 963. The chain crosses the membrane as a helical span at residues 1099-1119 (FILAISVLICSIIVFKFLAAL). N-linked (GlcNAc...) asparagine glycans are attached at residues asparagine 1322, asparagine 1356, and asparagine 1462. 3 helical membrane-spanning segments follow: residues 1494-1514 (LSTV…YWLV), 1520-1540 (IPYT…LIFI), and 1547-1567 (MVGW…PCPS). N-linked (GlcNAc...) asparagine glycosylation occurs at asparagine 1685. Residues 1689-1744 (LPSDDAILAEIREILRTADLMSVTKKSIKLELERAFGVNLDLKRPYINSGKGYTFP) form the DEK-C domain.

This sequence in the N-terminal section; belongs to the TRAFAC class myosin-kinesin ATPase superfamily. Myosin family. The protein in the C-terminal section; belongs to the chitin synthase family. Class V subfamily.

The protein resides in the cell membrane. Its subcellular location is the cell septum. The protein localises to the cell tip. It catalyses the reaction [(1-&gt;4)-N-acetyl-beta-D-glucosaminyl](n) + UDP-N-acetyl-alpha-D-glucosamine = [(1-&gt;4)-N-acetyl-beta-D-glucosaminyl](n+1) + UDP + H(+). Polymerizes chitin, a structural polymer of the cell wall and septum, by transferring the sugar moiety of UDP-GlcNAc to the non-reducing end of the growing chitin polymer. Important for hyphal growth and conidiophore development but not pathogenicity. The sequence is that of Chitin synthase E from Aspergillus fumigatus (Neosartorya fumigata).